We begin with the raw amino-acid sequence, 790 residues long: Pleckstrin homology domain-containing family G member 6 (790 aa).

Residues 63–91 (SGQARGLSPMRLRDPEPEKRHGGHVGAGL) are disordered. Basic and acidic residues predominate over residues 73–82 (RLRDPEPEKR). The DH domain occupies 161–353 (HQQEALWELL…ESFLRHINGQ (193 aa)). The region spanning 409–509 (QLLLEGPVRV…WLEKTQQAQA (101 aa)) is the PH domain. 2 stretches are compositionally biased toward basic and acidic residues: residues 529 to 538 (LYRDQDRESP) and 625 to 635 (ELRDIPLRPHP). Disordered stretches follow at residues 529–677 (LYRD…ASER), 690–730 (LRGQ…HTSL), and 748–790 (SQRI…ASEV). Basic and acidic residues predominate over residues 748 to 762 (SQRIEGAEEPRDSRP).

As to quaternary structure, interacts with MYH10. Interacts with ELMO1 and EZR (in an open conformation). Interacts with CSPP1. As to expression, highest expression in the placenta. Low levels in small intestine, lung, liver, kidney, thymus and heart.

Its subcellular location is the cell projection. The protein localises to the microvillus. It is found in the cytoplasm. The protein resides in the cytoskeleton. It localises to the spindle. Its subcellular location is the spindle pole. The protein localises to the cleavage furrow. Functionally, guanine nucleotide exchange factor activating the small GTPase RHOA, which, in turn, induces myosin filament formation. Also activates RHOG. Does not activate RAC1, or to a much lower extent than RHOA and RHOG. Part of a functional unit, involving PLEKHG6, MYH10 and RHOA, at the cleavage furrow to advance furrow ingression during cytokinesis. In epithelial cells, required for the formation of microvilli and membrane ruffles on the apical pole. Along with EZR, required for normal macropinocytosis. The protein is Pleckstrin homology domain-containing family G member 6 (PLEKHG6) of Homo sapiens (Human).